The sequence spans 434 residues: UDP-N-acetylmuramoylalanine--D-glutamate ligase (434 aa).

113 to 119 (GSNGKST) lines the ATP pocket.

It belongs to the MurCDEF family.

It is found in the cytoplasm. It catalyses the reaction UDP-N-acetyl-alpha-D-muramoyl-L-alanine + D-glutamate + ATP = UDP-N-acetyl-alpha-D-muramoyl-L-alanyl-D-glutamate + ADP + phosphate + H(+). It participates in cell wall biogenesis; peptidoglycan biosynthesis. Functionally, cell wall formation. Catalyzes the addition of glutamate to the nucleotide precursor UDP-N-acetylmuramoyl-L-alanine (UMA). The protein is UDP-N-acetylmuramoylalanine--D-glutamate ligase of Pasteurella multocida (strain Pm70).